The primary structure comprises 311 residues: MKIVFMGTPDFAAEHLRKLVEKKYNVVGVFSQPDKPKGRGKKLIPTPVKQVAREYGIPVFQPKSVNKGEGFEALKELKPDIIITVAYGKLLKQQVFELPPLGCYNVHASLLPKYRGAAPIQRALENGEKETGITIFKIDEGMDSGPIALQERIEISSDDNFGTLKKKLCNLGKKLLIEFLKKISAGEIKLTPQDHSQATYAPKITKEDTILIEFDNGERVFNKIRAYDPEPGVTTRLGELRVKLFGAGICDNCCVDAEPGQIISISKDSMVVACKKGAVKISKIQFPGKKVITVWQAKSGRLIEEGIKLGG.

109 to 112 (SLLP) contributes to the (6S)-5,6,7,8-tetrahydrofolate binding site.

The protein belongs to the Fmt family.

The enzyme catalyses L-methionyl-tRNA(fMet) + (6R)-10-formyltetrahydrofolate = N-formyl-L-methionyl-tRNA(fMet) + (6S)-5,6,7,8-tetrahydrofolate + H(+). Attaches a formyl group to the free amino group of methionyl-tRNA(fMet). The formyl group appears to play a dual role in the initiator identity of N-formylmethionyl-tRNA by promoting its recognition by IF2 and preventing the misappropriation of this tRNA by the elongation apparatus. This chain is Methionyl-tRNA formyltransferase, found in Kosmotoga olearia (strain ATCC BAA-1733 / DSM 21960 / TBF 19.5.1).